A 33-amino-acid chain; its full sequence is Cytochrome b6-f complex subunit 7 (33 aa).

A helical membrane pass occupies residues A9–I29.

It belongs to the PetM family. As to quaternary structure, the 4 large subunits of the cytochrome b6-f complex are cytochrome b6, subunit IV (17 kDa polypeptide, PetD), cytochrome f and the Rieske protein, while the 4 small subunits are PetG, PetL, PetM and PetN. The complex functions as a dimer.

Its subcellular location is the plastid. It is found in the cyanelle thylakoid membrane. Component of the cytochrome b6-f complex, which mediates electron transfer between photosystem II (PSII) and photosystem I (PSI), cyclic electron flow around PSI, and state transitions. The protein is Cytochrome b6-f complex subunit 7 of Cyanophora paradoxa.